The following is a 328-amino-acid chain: Ferredoxin--NADP reductase (328 aa).

Positions 34, 42, 47, 87, 120, 283, and 323 each coordinate FAD.

Belongs to the ferredoxin--NADP reductase type 2 family. In terms of assembly, homodimer. FAD serves as cofactor.

The catalysed reaction is 2 reduced [2Fe-2S]-[ferredoxin] + NADP(+) + H(+) = 2 oxidized [2Fe-2S]-[ferredoxin] + NADPH. In Pediococcus pentosaceus (strain ATCC 25745 / CCUG 21536 / LMG 10740 / 183-1w), this protein is Ferredoxin--NADP reductase.